The sequence spans 61 residues: Small ribosomal subunit protein uS14 (61 aa).

4 residues coordinate Zn(2+): cysteine 24, cysteine 27, cysteine 40, and cysteine 43.

Belongs to the universal ribosomal protein uS14 family. Zinc-binding uS14 subfamily. In terms of assembly, part of the 30S ribosomal subunit. Contacts proteins S3 and S10. The cofactor is Zn(2+).

Binds 16S rRNA, required for the assembly of 30S particles and may also be responsible for determining the conformation of the 16S rRNA at the A site. The chain is Small ribosomal subunit protein uS14 from Mycobacterium leprae (strain Br4923).